The sequence spans 211 residues: ATP phosphoribosyltransferase (211 aa).

This sequence belongs to the ATP phosphoribosyltransferase family. Short subfamily. In terms of assembly, heteromultimer composed of HisG and HisZ subunits.

Its subcellular location is the cytoplasm. It carries out the reaction 1-(5-phospho-beta-D-ribosyl)-ATP + diphosphate = 5-phospho-alpha-D-ribose 1-diphosphate + ATP. It functions in the pathway amino-acid biosynthesis; L-histidine biosynthesis; L-histidine from 5-phospho-alpha-D-ribose 1-diphosphate: step 1/9. Catalyzes the condensation of ATP and 5-phosphoribose 1-diphosphate to form N'-(5'-phosphoribosyl)-ATP (PR-ATP). Has a crucial role in the pathway because the rate of histidine biosynthesis seems to be controlled primarily by regulation of HisG enzymatic activity. This Pseudomonas putida (strain ATCC 700007 / DSM 6899 / JCM 31910 / BCRC 17059 / LMG 24140 / F1) protein is ATP phosphoribosyltransferase.